A 2275-amino-acid polypeptide reads, in one-letter code: Serine-rich adhesin for platelets (2275 aa).

A signal peptide spans 1-89 (MSKRQKEFHD…VNMLHDQQAF (89 aa)). The segment at 90 to 264 (AASDAPLTSE…TANTITVNKD (175 aa)) is serine-rich repeat region 1, SRR1. Residues 100–111 (LNTQSETVGNQN) are compositionally biased toward polar residues. Disordered stretches follow at residues 100 to 229 (LNTQ…STST) and 751 to 2247 (NSMS…GLLG). A compositionally biased stretch (low complexity) spans 112–128 (STTIEASTSTADSTSVT). Over residues 129–140 (KNSSSVQTSNSD) the composition is skewed to polar residues. Over residues 150-229 (VTSTTNSTSN…NKTSTTSTST (80 aa)) the composition is skewed to low complexity. Positions 265–751 (NLKQYMTTSG…TTFKYEVTRN (487 aa)) are non-repeat region (NRR). Composition is skewed to low complexity over residues 752-1392 (SMSD…LSLS) and 1402-2218 (SNSA…ATSE). Residues 752–2236 (SMSDSVSTSG…AQSEKRLPDT (1485 aa)) form a serine-rich repeat region 2, SRR2 region. The short motif at 2233-2237 (LPDTG) is the LPXTG sorting signal element. Position 2236 is a pentaglycyl murein peptidoglycan amidated threonine (Thr-2236). The propeptide at 2237 to 2275 (GDSIKQNGLLGGVMTLLVGLGLMKRKKKKDENDQDDSQA) is removed by sortase.

This sequence belongs to the serine-rich repeat protein (SRRP) family. In terms of assembly, interacts with human gp-340 (DMBT1). Proteolytically cleaved by a metalloprotease. In terms of processing, glycosylated. It is probable that most of the Ser residues in SSR1 and SSR2 are O-GlcNAcylated. Sequential glycosylation by sugar transferases are able to generate complex sugar polymorphisms.

Its subcellular location is the secreted. The protein resides in the cell wall. Functionally, mediates binding to human platelets, possibly through a receptor-ligand interaction. Probably associated with virulence in endovascular infection. Interacts with host (human) gp-340 via the non-repeat region (NRR or binding region). Binding is inhibited by N-acetylneuraminic acid (NeuAc). This is Serine-rich adhesin for platelets (sraP) from Staphylococcus aureus (strain MW2).